The chain runs to 156 residues: Small ribosomal subunit protein uS7 (156 aa).

The protein belongs to the universal ribosomal protein uS7 family. In terms of assembly, part of the 30S ribosomal subunit. Contacts proteins S9 and S11.

Functionally, one of the primary rRNA binding proteins, it binds directly to 16S rRNA where it nucleates assembly of the head domain of the 30S subunit. Is located at the subunit interface close to the decoding center, probably blocks exit of the E-site tRNA. The protein is Small ribosomal subunit protein uS7 of Tremblaya princeps.